The primary structure comprises 913 residues: Eukaryotic translation initiation factor 3 subunit C (913 aa).

The disordered stretch occupies residues 1–31; sequence MSRFFANGSDSESESSEEEVQASNFNKANNF. Positions 11–20 are enriched in acidic residues; sequence SESESSEEEV. Over residues 21–31 the composition is skewed to polar residues; the sequence is QASNFNKANNF. Residues S34, S165, S177, and S186 each carry the phosphoserine modification. 2 disordered regions span residues 157–195 and 208–285; these read FREA…AGTG and PTKV…EDGE. The segment covering 162–171 has biased composition (acidic residues); it reads DQESDVDEGE. The segment covering 172–184 has biased composition (basic and acidic residues); sequence GEAHDSDAERAGA. Positions 214-239 are enriched in acidic residues; the sequence is DEDDSDDSIDWDSDTESETESSEDEN. The segment covering 244–263 has biased composition (basic and acidic residues); it reads MRERFLKRTTEKEDKDDDKR. The segment covering 264–276 has biased composition (basic residues); it reads KDKRKEQKHKVRK. The 177-residue stretch at 645-821 folds into the PCI domain; it reads FHMHINLELL…ETVVMHRSEP (177 aa). The segment at 856–913 is disordered; the sequence is RGNMGNRDRGYNRNQNNQGGNWGGQRRDNRNQRNRNQRGHHKQQQQQQQQQVQTIEEE. Over residues 887 to 898 the composition is skewed to basic residues; the sequence is QRNRNQRGHHKQ.

It belongs to the eIF-3 subunit C family. Component of the eukaryotic translation initiation factor 3 (eIF-3) complex. The eIF-3 complex interacts with pix.

It is found in the cytoplasm. Component of the eukaryotic translation initiation factor 3 (eIF-3) complex, which is involved in protein synthesis of a specialized repertoire of mRNAs and, together with other initiation factors, stimulates binding of mRNA and methionyl-tRNAi to the 40S ribosome. The eIF-3 complex specifically targets and initiates translation of a subset of mRNAs involved in cell proliferation. This is Eukaryotic translation initiation factor 3 subunit C from Drosophila virilis (Fruit fly).